A 205-amino-acid chain; its full sequence is Large ribosomal subunit protein uL4 (205 aa).

The segment at G54–R78 is disordered. Residues K62–R71 are compositionally biased toward basic residues.

Belongs to the universal ribosomal protein uL4 family. As to quaternary structure, part of the 50S ribosomal subunit.

In terms of biological role, one of the primary rRNA binding proteins, this protein initially binds near the 5'-end of the 23S rRNA. It is important during the early stages of 50S assembly. It makes multiple contacts with different domains of the 23S rRNA in the assembled 50S subunit and ribosome. Its function is as follows. Forms part of the polypeptide exit tunnel. This chain is Large ribosomal subunit protein uL4, found in Ehrlichia chaffeensis (strain ATCC CRL-10679 / Arkansas).